The primary structure comprises 552 residues: 2,3-bisphosphoglycerate-independent phosphoglycerate mutase (552 aa).

Positions Met-1 to Asp-25 are enriched in polar residues. Residues Met-1–Val-30 form a disordered region. Mn(2+)-binding residues include Asp-38 and Ser-88. Catalysis depends on Ser-88, which acts as the Phosphoserine intermediate. Substrate contacts are provided by residues His-149, Arg-179 to Asp-180, Arg-217, Arg-223, Arg-293 to Arg-296, and Lys-373. Mn(2+) is bound by residues Asp-440, His-444, Asp-481, His-482, and His-500.

This sequence belongs to the BPG-independent phosphoglycerate mutase family. In terms of assembly, monomer. The cofactor is Mn(2+).

It catalyses the reaction (2R)-2-phosphoglycerate = (2R)-3-phosphoglycerate. Its pathway is carbohydrate degradation; glycolysis; pyruvate from D-glyceraldehyde 3-phosphate: step 3/5. Its function is as follows. Catalyzes the interconversion of 2-phosphoglycerate and 3-phosphoglycerate. This chain is 2,3-bisphosphoglycerate-independent phosphoglycerate mutase, found in Psychrobacter arcticus (strain DSM 17307 / VKM B-2377 / 273-4).